The primary structure comprises 632 residues: Chaperone protein HtpG (632 aa).

The tract at residues Met1–Arg339 is a; substrate-binding. The segment at Glu340–Arg559 is b. The interval Met560–Ala632 is c.

The protein belongs to the heat shock protein 90 family. As to quaternary structure, homodimer.

It is found in the cytoplasm. Its function is as follows. Molecular chaperone. Has ATPase activity. In Burkholderia mallei (strain NCTC 10247), this protein is Chaperone protein HtpG.